The sequence spans 351 residues: Protein RecA (351 aa).

Position 68-75 (68-75 (GPESSGKT)) interacts with ATP.

The protein belongs to the RecA family.

It localises to the cytoplasm. Its function is as follows. Can catalyze the hydrolysis of ATP in the presence of single-stranded DNA, the ATP-dependent uptake of single-stranded DNA by duplex DNA, and the ATP-dependent hybridization of homologous single-stranded DNAs. It interacts with LexA causing its activation and leading to its autocatalytic cleavage. The protein is Protein RecA of Chloroflexus aurantiacus (strain ATCC 29364 / DSM 637 / Y-400-fl).